A 529-amino-acid polypeptide reads, in one-letter code: Peptide chain release factor 3 (529 aa).

Residues 7-275 (EQRRTFGIIS…AVVELAPSPR (269 aa)) form the tr-type G domain. Residues 16–23 (SHPDAGKT), 84–88 (DTPGH), and 138–141 (NKLD) each bind GTP.

It belongs to the TRAFAC class translation factor GTPase superfamily. Classic translation factor GTPase family. PrfC subfamily.

Its subcellular location is the cytoplasm. Functionally, increases the formation of ribosomal termination complexes and stimulates activities of RF-1 and RF-2. It binds guanine nucleotides and has strong preference for UGA stop codons. It may interact directly with the ribosome. The stimulation of RF-1 and RF-2 is significantly reduced by GTP and GDP, but not by GMP. This Syntrophus aciditrophicus (strain SB) protein is Peptide chain release factor 3.